Consider the following 903-residue polypeptide: Chitin synthase 1 (903 aa).

Residues 1–154 form a disordered region; it reads MDPRYGAQPQ…YQDQPQQGGG (154 aa). The span at 67–79 shows a compositional bias: polar residues; it reads DHLNLNAAQSVDN. N-linked (GlcNAc...) asparagine glycosylation occurs at Asn-79. Positions 100–117 are enriched in low complexity; it reads YYNQPYEPRPQQQPYDQG. Positions 135–150 are enriched in polar residues; it reads HQPSDAPSEPYQDQPQ. 9 helical membrane-spanning segments follow: residues 444-464, 543-563, 573-593, 619-639, 654-674, 700-720, 729-749, 828-848, and 875-895; these read SAFG…YVAL, RWLN…LDFL, FAFF…WFAI, ILGV…FVLS, MCWF…FIAV, MLII…LIML, LVQY…YAFC, GVVL…LSSA, and IVLW…MWFL.

Belongs to the chitin synthase family. Class I subfamily.

Its subcellular location is the cell membrane. The enzyme catalyses [(1-&gt;4)-N-acetyl-beta-D-glucosaminyl](n) + UDP-N-acetyl-alpha-D-glucosamine = [(1-&gt;4)-N-acetyl-beta-D-glucosaminyl](n+1) + UDP + H(+). Its function is as follows. Polymerizes chitin, a structural polymer of the cell wall and septum, by transferring the sugar moiety of UDP-GlcNAc to the non-reducing end of the growing chitin polymer. Plays an important role in nuclear sorting or distribution. The chain is Chitin synthase 1 from Fusarium oxysporum f. sp. lycopersici (strain 4287 / CBS 123668 / FGSC 9935 / NRRL 34936) (Fusarium vascular wilt of tomato).